The following is a 345-amino-acid chain: Nuclear egress protein 1 (345 aa).

The CCCH-type zinc finger occupies 115–247 (CISLSEMGYT…FVFKPGSPLH (133 aa)).

The protein belongs to the herpesviridae NEC1 protein family. Forms a heterohexameric complex with NEC2. Interacts with capsid vertex specific component 2/CVC2; this interaction directs the capsid to the host inner nuclear membrane to initiate budding. In terms of processing, phosphorylated at serine residues in the N-terminus. This phosphorylation regulates the localization within the inner nuclear membrane.

It localises to the host nucleus inner membrane. In terms of biological role, plays an essential role in virion nuclear egress, the first step of virion release from infected cell. Within the host nucleus, NEC1 interacts with the newly formed capsid through the vertexes and directs it to the inner nuclear membrane by associating with NEC2. Induces the budding of the capsid at the inner nuclear membrane as well as its envelopment into the perinuclear space. There, the NEC1/NEC2 complex promotes the fusion of the enveloped capsid with the outer nuclear membrane and the subsequent release of the viral capsid into the cytoplasm where it will reach the secondary budding sites in the host Golgi or trans-Golgi network. The chain is Nuclear egress protein 1 from Psittacid herpesvirus 1 (isolate Amazon parrot/-/97-0001/1997) (PsHV-1).